The primary structure comprises 418 residues: Serine hydroxymethyltransferase (418 aa).

(6S)-5,6,7,8-tetrahydrofolate is bound by residues Leu117 and 121-123; that span reads GHL. Residue Lys225 is modified to N6-(pyridoxal phosphate)lysine.

The protein belongs to the SHMT family. Homodimer. Requires pyridoxal 5'-phosphate as cofactor.

The protein localises to the cytoplasm. It carries out the reaction (6R)-5,10-methylene-5,6,7,8-tetrahydrofolate + glycine + H2O = (6S)-5,6,7,8-tetrahydrofolate + L-serine. The protein operates within one-carbon metabolism; tetrahydrofolate interconversion. Its pathway is amino-acid biosynthesis; glycine biosynthesis; glycine from L-serine: step 1/1. In terms of biological role, catalyzes the reversible interconversion of serine and glycine with tetrahydrofolate (THF) serving as the one-carbon carrier. This reaction serves as the major source of one-carbon groups required for the biosynthesis of purines, thymidylate, methionine, and other important biomolecules. Also exhibits THF-independent aldolase activity toward beta-hydroxyamino acids, producing glycine and aldehydes, via a retro-aldol mechanism. The chain is Serine hydroxymethyltransferase from Mycoplasma mobile (strain ATCC 43663 / 163K / NCTC 11711) (Mesomycoplasma mobile).